The primary structure comprises 377 residues: Glutamate 5-kinase (377 aa).

Residue lysine 17 coordinates ATP. Substrate-binding residues include serine 56, aspartate 143, and asparagine 155. Residue 217-223 (SGGMFSK) coordinates ATP. The 79-residue stretch at 282–360 (AGDLVIDDGA…CEIESILGKC (79 aa)) folds into the PUA domain.

This sequence belongs to the glutamate 5-kinase family.

It localises to the cytoplasm. The enzyme catalyses L-glutamate + ATP = L-glutamyl 5-phosphate + ADP. Its pathway is amino-acid biosynthesis; L-proline biosynthesis; L-glutamate 5-semialdehyde from L-glutamate: step 1/2. In terms of biological role, catalyzes the transfer of a phosphate group to glutamate to form L-glutamate 5-phosphate. The polypeptide is Glutamate 5-kinase (Maridesulfovibrio salexigens (strain ATCC 14822 / DSM 2638 / NCIMB 8403 / VKM B-1763) (Desulfovibrio salexigens)).